The sequence spans 351 residues: MADPIFFKPSRELTIGDVADFTGASLRDPKLAPRSVERLASLKDAGEGALVFVEGKKNVSSLVGLKAAGVLCTESLADSVPSGIAVLVSRHPHRDFSAVGRMLFPASVRPESWLGETGISPAAFIHPTAQIEDGATVEAGAVIGSGVTIGAGTLIAATAVIGQNCQIGRNSYIAPGVSVQCAFIGNNVSLHPGVRIGQDGFGYVPGAAGLDKVPQLGRVIIQDNVEIGANTTVDRGSLDDTVIGEGTKIDNLVQIAHNVRIGRFCLVAAHCGISGSCVIGDQTMLGGRVGLADHLIIGSRVQVAAASGVMNDIPDGERWGGIPARPIKQWFRDIANIRSIGQSRKDASSDE.

The active-site Proton acceptor is His257.

The protein belongs to the transferase hexapeptide repeat family. LpxD subfamily. As to quaternary structure, homotrimer.

It carries out the reaction a UDP-3-O-[(3R)-3-hydroxyacyl]-alpha-D-glucosamine + a (3R)-hydroxyacyl-[ACP] = a UDP-2-N,3-O-bis[(3R)-3-hydroxyacyl]-alpha-D-glucosamine + holo-[ACP] + H(+). It participates in bacterial outer membrane biogenesis; LPS lipid A biosynthesis. In terms of biological role, catalyzes the N-acylation of UDP-3-O-acylglucosamine using 3-hydroxyacyl-ACP as the acyl donor. Is involved in the biosynthesis of lipid A, a phosphorylated glycolipid that anchors the lipopolysaccharide to the outer membrane of the cell. The chain is UDP-3-O-acylglucosamine N-acyltransferase from Brucella abortus (strain S19).